The chain runs to 146 residues: Gonadotropin subunit beta-2 (146 aa).

The N-terminal stretch at 1–28 (TGTPVKILVVRNILLLLFCLVVLLVFAQ) is a signal peptide. 6 disulfide bridges follow: Cys35-Cys83, Cys49-Cys98, Cys52-Cys136, Cys60-Cys114, Cys64-Cys116, and Cys119-Cys126. Asn39 carries an N-linked (GlcNAc...) asparagine glycan.

The protein belongs to the glycoprotein hormones subunit beta family. Heterodimer of an alpha and a beta chain.

Its subcellular location is the secreted. Its function is as follows. Involved in gametogenesis and steroidogenesis. The protein is Gonadotropin subunit beta-2 (cgbb) of Ctenopharyngodon idella (Grass carp).